Reading from the N-terminus, the 336-residue chain is tRNA-cytidine(32) 2-sulfurtransferase (336 aa).

Residues methionine 1 to arginine 34 are disordered. The span at alanine 10–threonine 22 shows a compositional bias: low complexity. Positions serine 75–serine 80 match the PP-loop motif motif. Residues cysteine 150, cysteine 153, and cysteine 241 each coordinate [4Fe-4S] cluster.

This sequence belongs to the TtcA family. Homodimer. The cofactor is Mg(2+). [4Fe-4S] cluster serves as cofactor.

It is found in the cytoplasm. It carries out the reaction cytidine(32) in tRNA + S-sulfanyl-L-cysteinyl-[cysteine desulfurase] + AH2 + ATP = 2-thiocytidine(32) in tRNA + L-cysteinyl-[cysteine desulfurase] + A + AMP + diphosphate + H(+). It participates in tRNA modification. In terms of biological role, catalyzes the ATP-dependent 2-thiolation of cytidine in position 32 of tRNA, to form 2-thiocytidine (s(2)C32). The sulfur atoms are provided by the cysteine/cysteine desulfurase (IscS) system. The sequence is that of tRNA-cytidine(32) 2-sulfurtransferase from Paraburkholderia phytofirmans (strain DSM 17436 / LMG 22146 / PsJN) (Burkholderia phytofirmans).